A 200-amino-acid chain; its full sequence is Large ribosomal subunit protein uL4 (200 aa).

The segment at 42 to 65 (TRAQKTRSDVSGGGAKPWRQKGTG) is disordered.

It belongs to the universal ribosomal protein uL4 family. As to quaternary structure, part of the 50S ribosomal subunit.

One of the primary rRNA binding proteins, this protein initially binds near the 5'-end of the 23S rRNA. It is important during the early stages of 50S assembly. It makes multiple contacts with different domains of the 23S rRNA in the assembled 50S subunit and ribosome. In terms of biological role, forms part of the polypeptide exit tunnel. The chain is Large ribosomal subunit protein uL4 from Photobacterium profundum (strain SS9).